The following is a 247-amino-acid chain: ATP synthase subunit a, chloroplastic (247 aa).

The next 5 helical transmembrane spans lie at 38 to 58 (QVLI…VIAV), 95 to 115 (VPFI…GALL), 134 to 154 (INTT…AGLS), 199 to 219 (LVVV…VMFL), and 220 to 240 (GLFT…AYIG).

Belongs to the ATPase A chain family. As to quaternary structure, F-type ATPases have 2 components, CF(1) - the catalytic core - and CF(0) - the membrane proton channel. CF(1) has five subunits: alpha(3), beta(3), gamma(1), delta(1), epsilon(1). CF(0) has four main subunits: a, b, b' and c.

The protein resides in the plastid. It localises to the chloroplast thylakoid membrane. Functionally, key component of the proton channel; it plays a direct role in the translocation of protons across the membrane. The polypeptide is ATP synthase subunit a, chloroplastic (Hordeum vulgare (Barley)).